We begin with the raw amino-acid sequence, 225 residues long: MNSPIEKLTRQLGYQFQDDELLNLALTHRSANSKHNERLEFLGDSILSFVIADELYHRFPKVNEGDMSRMRATLVRGNTLAELGREFGLGDYLKLGPGELKSGGFRRDSILADAVEAIIGAVYLDSDLEVVRGIVLNWYTSRLEAIKPGVSQKDPKTRLQEFLQGRRKPLPVYTVTNIKGEAHNQEFTVECDIAGMDKPVVGRGTSRRKAEQAAAELALEQLTNG.

One can recognise an RNase III domain in the interval 5-127 (IEKLTRQLGY…IIGAVYLDSD (123 aa)). Glu40 serves as a coordination point for Mg(2+). Asp44 is an active-site residue. Mg(2+) is bound by residues Asp113 and Glu116. Residue Glu116 is part of the active site. The 71-residue stretch at 154–224 (DPKTRLQEFL…AELALEQLTN (71 aa)) folds into the DRBM domain.

It belongs to the ribonuclease III family. In terms of assembly, homodimer. The cofactor is Mg(2+).

It localises to the cytoplasm. The catalysed reaction is Endonucleolytic cleavage to 5'-phosphomonoester.. Its function is as follows. Digests double-stranded RNA. Involved in the processing of primary rRNA transcript to yield the immediate precursors to the large and small rRNAs (23S and 16S). Processes some mRNAs, and tRNAs when they are encoded in the rRNA operon. Processes pre-crRNA and tracrRNA of type II CRISPR loci if present in the organism. This is Ribonuclease 3 from Vibrio vulnificus (strain CMCP6).